The sequence spans 97 residues: ATP-dependent Clp protease adapter protein ClpS (97 aa).

It belongs to the ClpS family. Binds to the N-terminal domain of the chaperone ClpA.

Functionally, involved in the modulation of the specificity of the ClpAP-mediated ATP-dependent protein degradation. The chain is ATP-dependent Clp protease adapter protein ClpS from Nautilia profundicola (strain ATCC BAA-1463 / DSM 18972 / AmH).